A 115-amino-acid polypeptide reads, in one-letter code: NAD(P)H-quinone oxidoreductase subunit M (115 aa).

It belongs to the complex I NdhM subunit family. NDH-1 can be composed of about 15 different subunits; different subcomplexes with different compositions have been identified which probably have different functions.

The protein localises to the cellular thylakoid membrane. It catalyses the reaction a plastoquinone + NADH + (n+1) H(+)(in) = a plastoquinol + NAD(+) + n H(+)(out). It carries out the reaction a plastoquinone + NADPH + (n+1) H(+)(in) = a plastoquinol + NADP(+) + n H(+)(out). Its function is as follows. NDH-1 shuttles electrons from an unknown electron donor, via FMN and iron-sulfur (Fe-S) centers, to quinones in the respiratory and/or the photosynthetic chain. The immediate electron acceptor for the enzyme in this species is believed to be plastoquinone. Couples the redox reaction to proton translocation, and thus conserves the redox energy in a proton gradient. Cyanobacterial NDH-1 also plays a role in inorganic carbon-concentration. The polypeptide is NAD(P)H-quinone oxidoreductase subunit M (Prochlorococcus marinus (strain MIT 9312)).